Reading from the N-terminus, the 139-residue chain is Putative nickel-responsive regulator (139 aa).

Positions 79, 90, 92, and 98 each coordinate Ni(2+).

This sequence belongs to the transcriptional regulatory CopG/NikR family. It depends on Ni(2+) as a cofactor.

Transcriptional regulator. This chain is Putative nickel-responsive regulator, found in Trichlorobacter lovleyi (strain ATCC BAA-1151 / DSM 17278 / SZ) (Geobacter lovleyi).